The sequence spans 132 residues: MWNEFKKFALKGNVMDLAVGVVIGGAFGKIVSSLVSDVIMPLVGLLLGGVNFTGLSFTFGKAVVKYGAFIQTVVDFLIIAFSIFLFIKLFNKLTFKKEEEKKEEVPEPTKEEVLLGEIRDLLKQQNASKDRA.

The next 3 membrane-spanning stretches (helical) occupy residues 8–28 (FALK…GAFG), 30–50 (IVSS…LGGV), and 67–87 (GAFI…FLFI).

Belongs to the MscL family. As to quaternary structure, homopentamer.

It localises to the cell membrane. Its function is as follows. Channel that opens in response to stretch forces in the membrane lipid bilayer. May participate in the regulation of osmotic pressure changes within the cell. The protein is Large-conductance mechanosensitive channel of Bacillus cytotoxicus (strain DSM 22905 / CIP 110041 / 391-98 / NVH 391-98).